A 426-amino-acid polypeptide reads, in one-letter code: 3-phosphoshikimate 1-carboxyvinyltransferase (426 aa).

3-phosphoshikimate-binding residues include K21, S22, and R26. Residue K21 coordinates phosphoenolpyruvate. Phosphoenolpyruvate contacts are provided by G91 and R119. The 3-phosphoshikimate site is built by S162, S163, Q164, S190, D304, and K331. Q164 serves as a coordination point for phosphoenolpyruvate. D304 functions as the Proton acceptor in the catalytic mechanism. Phosphoenolpyruvate-binding residues include R335, R377, and K403.

This sequence belongs to the EPSP synthase family. In terms of assembly, monomer.

Its subcellular location is the cytoplasm. The enzyme catalyses 3-phosphoshikimate + phosphoenolpyruvate = 5-O-(1-carboxyvinyl)-3-phosphoshikimate + phosphate. It participates in metabolic intermediate biosynthesis; chorismate biosynthesis; chorismate from D-erythrose 4-phosphate and phosphoenolpyruvate: step 6/7. In terms of biological role, catalyzes the transfer of the enolpyruvyl moiety of phosphoenolpyruvate (PEP) to the 5-hydroxyl of shikimate-3-phosphate (S3P) to produce enolpyruvyl shikimate-3-phosphate and inorganic phosphate. The protein is 3-phosphoshikimate 1-carboxyvinyltransferase of Clostridium kluyveri (strain ATCC 8527 / DSM 555 / NBRC 12016 / NCIMB 10680 / K1).